A 340-amino-acid chain; its full sequence is Ketol-acid reductoisomerase (NADP(+)) (340 aa).

In terms of domain architecture, KARI N-terminal Rossmann spans 3 to 182; sequence VQMEYEKDVK…GAARVGLLET (180 aa). Residues 26–29, Arg-49, Ser-53, and 83–86 contribute to the NADP(+) site; these read YGSQ and DEIQ. The active site involves His-108. Gly-134 contributes to the NADP(+) binding site. One can recognise a KARI C-terminal knotted domain in the interval 183–328; it reads TYKEETEEDL…AELRKAMPFV (146 aa). Asp-191, Glu-195, Glu-227, and Glu-231 together coordinate Mg(2+). Residue Ser-252 coordinates substrate.

Belongs to the ketol-acid reductoisomerase family. Requires Mg(2+) as cofactor.

The enzyme catalyses (2R)-2,3-dihydroxy-3-methylbutanoate + NADP(+) = (2S)-2-acetolactate + NADPH + H(+). It carries out the reaction (2R,3R)-2,3-dihydroxy-3-methylpentanoate + NADP(+) = (S)-2-ethyl-2-hydroxy-3-oxobutanoate + NADPH + H(+). Its pathway is amino-acid biosynthesis; L-isoleucine biosynthesis; L-isoleucine from 2-oxobutanoate: step 2/4. It participates in amino-acid biosynthesis; L-valine biosynthesis; L-valine from pyruvate: step 2/4. Involved in the biosynthesis of branched-chain amino acids (BCAA). Catalyzes an alkyl-migration followed by a ketol-acid reduction of (S)-2-acetolactate (S2AL) to yield (R)-2,3-dihydroxy-isovalerate. In the isomerase reaction, S2AL is rearranged via a Mg-dependent methyl migration to produce 3-hydroxy-3-methyl-2-ketobutyrate (HMKB). In the reductase reaction, this 2-ketoacid undergoes a metal-dependent reduction by NADPH to yield (R)-2,3-dihydroxy-isovalerate. The sequence is that of Ketol-acid reductoisomerase (NADP(+)) from Streptococcus thermophilus (strain CNRZ 1066).